The following is a 374-amino-acid chain: tRNA-specific 2-thiouridylase MnmA (374 aa).

Residues 17–24 and methionine 43 contribute to the ATP site; that span reads GMSGGVDS. An interaction with target base in tRNA region spans residues 103–105; it reads NPD. The active-site Nucleophile is cysteine 108. Cysteine 108 and cysteine 204 are joined by a disulfide. ATP is bound at residue glycine 132. Residues 154 to 156 form an interaction with tRNA region; sequence KDQ. Cysteine 204 (cysteine persulfide intermediate) is an active-site residue. The tract at residues 316–317 is interaction with tRNA; sequence RY.

Belongs to the MnmA/TRMU family.

The protein localises to the cytoplasm. The catalysed reaction is S-sulfanyl-L-cysteinyl-[protein] + uridine(34) in tRNA + AH2 + ATP = 2-thiouridine(34) in tRNA + L-cysteinyl-[protein] + A + AMP + diphosphate + H(+). In terms of biological role, catalyzes the 2-thiolation of uridine at the wobble position (U34) of tRNA, leading to the formation of s(2)U34. This Pseudomonas fluorescens (strain SBW25) protein is tRNA-specific 2-thiouridylase MnmA.